Here is a 357-residue protein sequence, read N- to C-terminus: Histidinol-phosphate aminotransferase (357 aa).

An N6-(pyridoxal phosphate)lysine modification is found at lysine 218.

This sequence belongs to the class-II pyridoxal-phosphate-dependent aminotransferase family. Histidinol-phosphate aminotransferase subfamily. Homodimer. Pyridoxal 5'-phosphate is required as a cofactor.

It catalyses the reaction L-histidinol phosphate + 2-oxoglutarate = 3-(imidazol-4-yl)-2-oxopropyl phosphate + L-glutamate. The protein operates within amino-acid biosynthesis; L-histidine biosynthesis; L-histidine from 5-phospho-alpha-D-ribose 1-diphosphate: step 7/9. This Chlorobium luteolum (strain DSM 273 / BCRC 81028 / 2530) (Pelodictyon luteolum) protein is Histidinol-phosphate aminotransferase.